The following is a 241-amino-acid chain: Triosephosphate isomerase (241 aa).

9–11 is a substrate binding site; it reads NWK. Catalysis depends on His-96, which acts as the Electrophile. Glu-165 (proton acceptor) is an active-site residue. Substrate-binding positions include Gly-171, Ser-204, and 225–226; that span reads GG.

Belongs to the triosephosphate isomerase family. Homodimer.

Its subcellular location is the cytoplasm. The catalysed reaction is D-glyceraldehyde 3-phosphate = dihydroxyacetone phosphate. Its pathway is carbohydrate biosynthesis; gluconeogenesis. The protein operates within carbohydrate degradation; glycolysis; D-glyceraldehyde 3-phosphate from glycerone phosphate: step 1/1. In terms of biological role, involved in the gluconeogenesis. Catalyzes stereospecifically the conversion of dihydroxyacetone phosphate (DHAP) to D-glyceraldehyde-3-phosphate (G3P). The protein is Triosephosphate isomerase of Picosynechococcus sp. (strain ATCC 27264 / PCC 7002 / PR-6) (Agmenellum quadruplicatum).